The chain runs to 402 residues: NADH-quinone oxidoreductase subunit D (402 aa).

This sequence belongs to the complex I 49 kDa subunit family. As to quaternary structure, NDH-1 is composed of 14 different subunits. Subunits NuoB, C, D, E, F, and G constitute the peripheral sector of the complex.

Its subcellular location is the cell inner membrane. It carries out the reaction a quinone + NADH + 5 H(+)(in) = a quinol + NAD(+) + 4 H(+)(out). In terms of biological role, NDH-1 shuttles electrons from NADH, via FMN and iron-sulfur (Fe-S) centers, to quinones in the respiratory chain. The immediate electron acceptor for the enzyme in this species is believed to be ubiquinone. Couples the redox reaction to proton translocation (for every two electrons transferred, four hydrogen ions are translocated across the cytoplasmic membrane), and thus conserves the redox energy in a proton gradient. In Xanthobacter autotrophicus (strain ATCC BAA-1158 / Py2), this protein is NADH-quinone oxidoreductase subunit D.